We begin with the raw amino-acid sequence, 216 residues long: Probable transaldolase (216 aa).

Lys85 (schiff-base intermediate with substrate) is an active-site residue.

The protein belongs to the transaldolase family. Type 3B subfamily.

The protein resides in the cytoplasm. It catalyses the reaction D-sedoheptulose 7-phosphate + D-glyceraldehyde 3-phosphate = D-erythrose 4-phosphate + beta-D-fructose 6-phosphate. The protein operates within carbohydrate degradation; pentose phosphate pathway; D-glyceraldehyde 3-phosphate and beta-D-fructose 6-phosphate from D-ribose 5-phosphate and D-xylulose 5-phosphate (non-oxidative stage): step 2/3. Transaldolase is important for the balance of metabolites in the pentose-phosphate pathway. The chain is Probable transaldolase from Dehalococcoides mccartyi (strain ATCC BAA-2266 / KCTC 15142 / 195) (Dehalococcoides ethenogenes (strain 195)).